The primary structure comprises 202 residues: Imidazoleglycerol-phosphate dehydratase (202 aa).

This sequence belongs to the imidazoleglycerol-phosphate dehydratase family.

The protein localises to the cytoplasm. The enzyme catalyses D-erythro-1-(imidazol-4-yl)glycerol 3-phosphate = 3-(imidazol-4-yl)-2-oxopropyl phosphate + H2O. Its pathway is amino-acid biosynthesis; L-histidine biosynthesis; L-histidine from 5-phospho-alpha-D-ribose 1-diphosphate: step 6/9. This Corynebacterium efficiens (strain DSM 44549 / YS-314 / AJ 12310 / JCM 11189 / NBRC 100395) protein is Imidazoleglycerol-phosphate dehydratase.